The following is a 101-amino-acid chain: Immunity protein CdiI-2 (101 aa).

In terms of assembly, specifically interacts with the truncated CT fragment of cognate toxin protein CdiA-2, which inhibits CdiA-2 tRNA nuclease activity.

Its function is as follows. Immunity protein component of a toxin-immunity protein module, which functions as a cellular contact-dependent growth inhibition (CDI) system. CDI modules allow bacteria to communicate with and inhibit the growth of closely related neighboring bacteria in a contact-dependent fashion. Neutralizes the toxic activity of cognate toxin CdiA (C-terminal 301 residue CT fragment) upon expression in E.coli. Does not inhibit toxic activity of CdiA from other strains of B.pseudomallei. Functionally, expression of this cdiAIB locus in B.thailandensis confers protection against other bacteria carrying the locus; growth inhibition requires cellular contact. This Burkholderia pseudomallei (strain 1026b) protein is Immunity protein CdiI-2 (cdiI2).